We begin with the raw amino-acid sequence, 310 residues long: Fe-S cluster assembly protein dre2 (310 aa).

Disordered stretches follow at residues 1 to 30 and 165 to 184; these read MAPSFVSIDTTPDFDMTPTSSKSADSGKRT and APAPAPVVQPPPIISSDDND. Positions 24–154 are N-terminal SAM-like domain; sequence ADSGKRTLLL…KMDVGNGAAV (131 aa). A linker region spans residues 155–202; it reads PLRLGRKKKAAPAPAPVVQPPPIISSDDNDLNDDELIDEDTLLSADDL. The span at 167–177 shows a compositional bias: pro residues; sequence APAPVVQPPPI. Cys212, Cys223, Cys226, and Cys228 together coordinate [2Fe-2S] cluster. A fe-S binding site A region spans residues 212 to 228; the sequence is CQPKAGKRRRACKDCTC. 4 residues coordinate [4Fe-4S] cluster: Cys273, Cys276, Cys284, and Cys287. 2 consecutive short sequence motifs (cx2C motif) follow at residues 273–276 and 284–287; these read CGNC and CDGC. Residues 273 to 287 form a fe-S binding site B region; it reads CGNCALGDAFRCDGC.

Belongs to the anamorsin family. In terms of assembly, monomer. Interacts with tah18. Interacts with mia40. Requires [2Fe-2S] cluster as cofactor. [4Fe-4S] cluster is required as a cofactor.

Its subcellular location is the cytoplasm. It localises to the mitochondrion intermembrane space. Functionally, component of the cytosolic iron-sulfur (Fe-S) protein assembly (CIA) machinery required for the maturation of extramitochondrial Fe-S proteins. Part of an electron transfer chain functioning in an early step of cytosolic Fe-S biogenesis, facilitating the de novo assembly of a [4Fe-4S] cluster on the scaffold complex cfd1-nbp35. Electrons are transferred to dre2 from NADPH via the FAD- and FMN-containing protein tah18. Tah18-dre2 are also required for the assembly of the diferric tyrosyl radical cofactor of ribonucleotide reductase (RNR), probably by providing electrons for reduction during radical cofactor maturation in the catalytic small subunit rnr2. This chain is Fe-S cluster assembly protein dre2, found in Emericella nidulans (strain FGSC A4 / ATCC 38163 / CBS 112.46 / NRRL 194 / M139) (Aspergillus nidulans).